The chain runs to 540 residues: DM7 family protein GM11956 (540 aa).

Positions Ala-416 to Asp-443 are disordered. Over residues Thr-417–Asp-443 the composition is skewed to basic and acidic residues.

This sequence belongs to the DM7 family.

The polypeptide is DM7 family protein GM11956 (Drosophila sechellia (Fruit fly)).